We begin with the raw amino-acid sequence, 203 residues long: Outer-membrane lipoprotein carrier protein (203 aa).

The N-terminal stretch at 1-20 is a signal peptide; that stretch reads MRRGRVWLAALCLAAGAAHA.

Belongs to the LolA family. As to quaternary structure, monomer.

It is found in the periplasm. In terms of biological role, participates in the translocation of lipoproteins from the inner membrane to the outer membrane. Only forms a complex with a lipoprotein if the residue after the N-terminal Cys is not an aspartate (The Asp acts as a targeting signal to indicate that the lipoprotein should stay in the inner membrane). The polypeptide is Outer-membrane lipoprotein carrier protein (Methylibium petroleiphilum (strain ATCC BAA-1232 / LMG 22953 / PM1)).